A 105-amino-acid chain; its full sequence is Circadian clock oscillator protein KaiB (105 aa).

It belongs to the KaiB family. As to quaternary structure, the KaiABC complex composition changes during the circadian cycle to control KaiC phosphorylation. Complexes KaiC(6), KaiA(2-4):KaiC(6), KaiB(6):KaiC(6) and KaiC(6):KaiB(6):KaiA(12) are among the most important forms, many form cooperatively. Undergoes a major conformational rearrangment; in the free state forms homotetramers as a dimer of dimers. When bound to the CI domain of KaiC switches to a monomeric thioredoxin-fold (KaiB(fs)). KaiB(fs) binds CikA, leading it to dephosphorylate phospho-RpaA.

Key component of the KaiABC oscillator complex, which constitutes the main circadian regulator in cyanobacteria. Complex composition changes during the circadian cycle to control KaiC phosphorylation. KaiA stimulates KaiC autophosphorylation, while KaiB sequesters KaiA, leading to KaiC autodephosphorylation. Phospho-Ser-431 KaiC accumulation triggers binding of KaiB to form the KaiB(6):KaiC(6) complex, leading to changes in output regulators CikA and SasA. KaiB switches to a thioredoxin-like fold (KaiB(fs)) when bound to KaiC. KaiB(6):KaiC(6) formation exposes a site for KaiA binding that sequesters KaiA from KaiC, making the KaiC(6):KaiB(6):KaiA(12) complex that results in KaiC autodephosphorylation. Its function is as follows. A metamorphic protein which reversibly switches between an inactive tetrameric fold and a rare, thioredoxin-like monomeric fold (KaiB(fs)). KaiB(fs) binds phospho-KaiC, KaiA and CikA. KaiA and CikA compete for binding to KaiB(fs), and KaiB(fs) and SasA compete for binding to KaiC, thus the clock oscillator and output signal pathway are tightly coupled. In Cyanothece sp. (strain PCC 7425 / ATCC 29141), this protein is Circadian clock oscillator protein KaiB.